Here is a 209-residue protein sequence, read N- to C-terminus: Imidazoleglycerol-phosphate dehydratase (209 aa).

Belongs to the imidazoleglycerol-phosphate dehydratase family.

It is found in the cytoplasm. It catalyses the reaction D-erythro-1-(imidazol-4-yl)glycerol 3-phosphate = 3-(imidazol-4-yl)-2-oxopropyl phosphate + H2O. It functions in the pathway amino-acid biosynthesis; L-histidine biosynthesis; L-histidine from 5-phospho-alpha-D-ribose 1-diphosphate: step 6/9. The protein is Imidazoleglycerol-phosphate dehydratase of Prochlorococcus marinus (strain MIT 9313).